The chain runs to 552 residues: Putative transport protein ECA4401 (552 aa).

A run of 5 helical transmembrane segments spans residues 4–24 (IALT…IGNW), 26–46 (IYGV…VGHV), 65–85 (FGLI…FFSS), 90–112 (GLRL…VMLH), and 158–178 (TGYA…MWLM). RCK C-terminal domains follow at residues 191-276 (KQFE…VIGN) and 279-361 (ETSL…IVGN). The next 6 helical transmembrane spans lie at 371 to 391 (MLPV…PLMV), 393 to 413 (GFPV…ALVL), 439 to 459 (IVLF…DTLL), 464 to 484 (VWWI…VGIL), 493 to 513 (YLTL…LAFA), and 530 to 550 (VYPL…VLFL).

Belongs to the AAE transporter (TC 2.A.81) family. YidE subfamily.

Its subcellular location is the cell membrane. The protein is Putative transport protein ECA4401 of Pectobacterium atrosepticum (strain SCRI 1043 / ATCC BAA-672) (Erwinia carotovora subsp. atroseptica).